Reading from the N-terminus, the 791-residue chain is Probable potassium transporter 11 (791 aa).

Residues 1 to 49 are Cytoplasmic-facing; that stretch reads MASLSESEGTNRGSMWELDQNLDQPMDEEASRLKNMYREKKFSSLLLLR. A helical transmembrane segment spans residues 50-70; the sequence is LAFQSLGVVFGDLGTSPLYVF. At 71–87 the chain is on the extracellular side; the sequence is YNAFPHGVDDEEDVIGA. A helical membrane pass occupies residues 88–108; it reads LSLIIYTLTLIPLLKYVFVVL. At 109-175 the chain is on the cytoplasmic side; it reads RANDNGQGGT…EAHAYKRNCL (67 aa). Residues 176–196 form a helical membrane-spanning segment; it reads LIVVLIGTCTAIGDGILTPAI. Over 197–215 the chain is Extracellular; the sequence is SVLSASGGIKVQNPNMSTD. N-linked (GlcNAc...) asparagine glycosylation occurs at Asn211. A helical transmembrane segment spans residues 216–236; it reads VVVIVSVIILIGLFSMQHYGT. The Cytoplasmic segment spans residues 237–238; the sequence is DK. Residues 239-259 form a helical membrane-spanning segment; that stretch reads VGWLFAPIVLLWFILIGSVGA. The Extracellular portion of the chain corresponds to 260–289; the sequence is LNIHKYKGSVLKAYNPVYIYRYFQRRNSDS. The chain crosses the membrane as a helical span at residues 290–310; sequence WASLGGIMLSITGTEALFADL. Residues 311-315 are Cytoplasmic-facing; it reads CHFPV. Residues 316–338 traverse the membrane as a helical segment; that stretch reads FAIQIAFTLIVFPCLLLAYTGQA. At 339-359 the chain is on the extracellular side; sequence AYIIAHKDHVADAFYRSIPDS. Residues 360-380 traverse the membrane as a helical segment; that stretch reads IYWPAFVIATAAAIVASQATI. The Cytoplasmic portion of the chain corresponds to 381–411; that stretch reads SATYSIIKQALALGCFPRVKIVHTSKKFLGQ. The chain crosses the membrane as a helical span at residues 412-432; it reads IYIPDINWVLLILCIAVTAGF. Residues 433-444 lie on the Extracellular side of the membrane; that stretch reads KNQSQIGNAYGT. An N-linked (GlcNAc...) asparagine glycan is attached at Asn434. Residues 445–465 form a helical membrane-spanning segment; the sequence is AVVIVMLVTTFLMVPIMLLVW. The Cytoplasmic portion of the chain corresponds to 466–468; that stretch reads KSH. A helical transmembrane segment spans residues 469-489; it reads WILVVTFIVLSLMVEIPYFSA. Residues 490–496 are Extracellular-facing; that stretch reads CLLKIDQ. The helical transmembrane segment at 497 to 517 threads the bilayer; it reads GGWVPLVIATAFFIIMYVWHF. Over 518–791 the chain is Cytoplasmic; sequence CTVKRYEFEM…LLNVGQIYYI (274 aa).

Belongs to the HAK/KUP transporter (TC 2.A.72.3) family.

Its subcellular location is the membrane. Functionally, high-affinity potassium transporter. This Oryza sativa subsp. japonica (Rice) protein is Probable potassium transporter 11.